The sequence spans 101 residues: Small ribosomal subunit protein uS14A (101 aa).

The interval Arg32–Arg71 is disordered. 2 stretches are compositionally biased toward basic and acidic residues: residues Glu38–Arg53 and Arg61–Pro70.

It belongs to the universal ribosomal protein uS14 family. As to quaternary structure, part of the 30S ribosomal subunit. Contacts proteins S3 and S10.

Binds 16S rRNA, required for the assembly of 30S particles and may also be responsible for determining the conformation of the 16S rRNA at the A site. This Streptomyces griseus subsp. griseus (strain JCM 4626 / CBS 651.72 / NBRC 13350 / KCC S-0626 / ISP 5235) protein is Small ribosomal subunit protein uS14A.